A 101-amino-acid polypeptide reads, in one-letter code: CRISPR-associated endoribonuclease Cas2 (101 aa).

Aspartate 8 is a Mg(2+) binding site.

Belongs to the CRISPR-associated endoribonuclease Cas2 protein family. Homodimer, forms a heterotetramer with a Cas1 homodimer. Mg(2+) is required as a cofactor.

In terms of biological role, CRISPR (clustered regularly interspaced short palindromic repeat), is an adaptive immune system that provides protection against mobile genetic elements (viruses, transposable elements and conjugative plasmids). CRISPR clusters contain sequences complementary to antecedent mobile elements and target invading nucleic acids. CRISPR clusters are transcribed and processed into CRISPR RNA (crRNA). Functions as a ssRNA-specific endoribonuclease. Involved in the integration of spacer DNA into the CRISPR cassette. The polypeptide is CRISPR-associated endoribonuclease Cas2 (Lacticaseibacillus rhamnosus (strain ATCC 53103 / LMG 18243 / GG) (Lactobacillus rhamnosus)).